The chain runs to 489 residues: Rhamnulokinase (489 aa).

13-17 lines the ATP pocket; the sequence is ASSGR. Cysteines 68 and 222 form a disulfide. Substrate-binding positions include Gly83 and 236 to 238; that span reads HDT. Asp237 functions as the Proton acceptor in the catalytic mechanism. Residue Thr259 participates in ATP binding. Residue Asn296 coordinates substrate. Gln304 is a binding site for ATP. A disulfide bond links Cys353 and Cys370. Gly402 contacts ATP. Cys413 and Cys417 form a disulfide bridge.

Belongs to the rhamnulokinase family. In terms of assembly, monomer. It depends on Mg(2+) as a cofactor.

It catalyses the reaction L-rhamnulose + ATP = L-rhamnulose 1-phosphate + ADP + H(+). It participates in carbohydrate degradation; L-rhamnose degradation; glycerone phosphate from L-rhamnose: step 2/3. Involved in the catabolism of L-rhamnose (6-deoxy-L-mannose). Catalyzes the transfer of the gamma-phosphate group from ATP to the 1-hydroxyl group of L-rhamnulose to yield L-rhamnulose 1-phosphate. The polypeptide is Rhamnulokinase (Escherichia coli O157:H7).